The primary structure comprises 398 residues: Phosphoglycerate kinase (398 aa).

Substrate-binding positions include 21-23 (DFN), Arg-36, 59-62 (HLGR), Arg-119, and Arg-157. Residues Lys-208, Gly-296, Glu-327, and 354 to 357 (GGDS) each bind ATP.

Belongs to the phosphoglycerate kinase family. In terms of assembly, monomer.

The protein localises to the cytoplasm. The enzyme catalyses (2R)-3-phosphoglycerate + ATP = (2R)-3-phospho-glyceroyl phosphate + ADP. It participates in carbohydrate degradation; glycolysis; pyruvate from D-glyceraldehyde 3-phosphate: step 2/5. In Streptococcus pyogenes serotype M5 (strain Manfredo), this protein is Phosphoglycerate kinase.